Reading from the N-terminus, the 270-residue chain is SURF1-like protein (270 aa).

The next 2 helical transmembrane spans lie at 7-29 (GFKLFFIFPVIAFGLGTWQVYRY) and 246-265 (YIGTWYTLSASLFFIYFRYM).

Belongs to the SURF1 family.

Its subcellular location is the mitochondrion inner membrane. In terms of biological role, probably involved in the biogenesis of the COX complex. The protein is SURF1-like protein (surf1-1) of Dictyostelium discoideum (Social amoeba).